The primary structure comprises 318 residues: Methionyl-tRNA formyltransferase (318 aa).

110 to 113 (SLLP) contributes to the (6S)-5,6,7,8-tetrahydrofolate binding site.

Belongs to the Fmt family.

The catalysed reaction is L-methionyl-tRNA(fMet) + (6R)-10-formyltetrahydrofolate = N-formyl-L-methionyl-tRNA(fMet) + (6S)-5,6,7,8-tetrahydrofolate + H(+). In terms of biological role, attaches a formyl group to the free amino group of methionyl-tRNA(fMet). The formyl group appears to play a dual role in the initiator identity of N-formylmethionyl-tRNA by promoting its recognition by IF2 and preventing the misappropriation of this tRNA by the elongation apparatus. This is Methionyl-tRNA formyltransferase from Latilactobacillus sakei subsp. sakei (strain 23K) (Lactobacillus sakei subsp. sakei).